The following is a 176-amino-acid chain: Ribosome maturation factor RimM (176 aa).

The PRC barrel domain maps to 92 to 165 (EDEFLYSDLI…RLVVVPPVYA (74 aa)).

It belongs to the RimM family. As to quaternary structure, binds ribosomal protein uS19.

The protein resides in the cytoplasm. In terms of biological role, an accessory protein needed during the final step in the assembly of 30S ribosomal subunit, possibly for assembly of the head region. Essential for efficient processing of 16S rRNA. May be needed both before and after RbfA during the maturation of 16S rRNA. It has affinity for free ribosomal 30S subunits but not for 70S ribosomes. This Paramagnetospirillum magneticum (strain ATCC 700264 / AMB-1) (Magnetospirillum magneticum) protein is Ribosome maturation factor RimM.